The following is a 2193-amino-acid chain: Highly reducing polyketide synthase VdtX (2193 aa).

In terms of domain architecture, Ketosynthase family 3 (KS3) spans 1-417 (MAICGIAVRL…GVNAHVIIES (417 aa)). Catalysis depends on for beta-ketoacyl synthase activity residues Cys-170, His-306, and His-340. The segment at 513–809 (VFAGQGAQWP…HPYVPCLIRF (297 aa)) is malonyl-CoA:ACP transacylase (MAT) domain. Positions 877–1001 (HELLGTRVVD…GEVAQENLSR (125 aa)) are N-terminal hotdog fold. The tract at residues 877 to 1128 (HELLGTRVVD…DIVLRPLGAN (252 aa)) is dehydratase (DH) domain. A PKS/mFAS DH domain is found at 877–1202 (HELLGTRVVD…LQRQPKPSSE (326 aa)). His-909 acts as the Proton acceptor; for dehydratase activity in catalysis. Residues 1032–1202 (SVTSNTVSGR…LQRQPKPSSE (171 aa)) form a C-terminal hotdog fold region. Asp-1093 acts as the Proton donor; for dehydratase activity in catalysis. The interval 1256-1390 (NYLNEPQQRI…DRWDSILKAA (135 aa)) is methyltransferase (CMet) domain. An enoyl reductase (ER) domain region spans residues 1575 to 1783 (GQQVQLLGDD…SGQHIGQLRL (209 aa)). The interval 1807-1981 (ASYLLVGGLG…ASVIDIGEVQ (175 aa)) is ketoreductase (KR) domain. One can recognise a Carrier domain in the interval 2102 to 2183 (PSATQFVSLE…AMGEHVIREL (82 aa)). O-(pantetheine 4'-phosphoryl)serine is present on Ser-2143.

Its function is as follows. Highly reducing polyketide synthase; part of the gene cluster that mediates the biosynthesis of viriditoxin, one of the 'classical' secondary metabolites produced by fungi and that has antibacterial activity. The first step is performed by the polyketide synthase VdtA which condenses one acetyl-CoA and 6 malonyl-CoA units to form the heptaketide monomer backbone of viriditoxin. The product of VdtA is then O-methylated on C7 by the O-methyltransferase VdtC. The O-methyl group is important for the stereoselective coupling of the monomers at the final step of viriditoxin biosynthesis. The short-chain dehydrogenase/reductase VdtF is involved in the reduction of the C3-C4 double bond. The FAD-binding monooxygenase VdtE then converts the ketone group into a methyl-ester group to yield semi-viriditoxin. Finally, the laccase VdtB is involved in dimerization of 2 semi-viriditoxin molecules to yield the final viriditoxin. The non-catalytic carboxylesterase-like protein VdtD affects the stereochemistical outcome of the coupling. The highly reducing polyketide synthase VdtX is not involved in viriditoxin synthesis, but might possibly play a role in the production of additional metabolites not identified yet. In Byssochlamys spectabilis (Paecilomyces variotii), this protein is Highly reducing polyketide synthase VdtX.